The sequence spans 185 residues: Ribosome-recycling factor (185 aa).

This sequence belongs to the RRF family.

The protein localises to the cytoplasm. Its function is as follows. Responsible for the release of ribosomes from messenger RNA at the termination of protein biosynthesis. May increase the efficiency of translation by recycling ribosomes from one round of translation to another. The protein is Ribosome-recycling factor of Shewanella baltica (strain OS223).